The following is a 203-amino-acid chain: Small ribosomal subunit protein uS4 (203 aa).

Residues 93–156 (RRLDNVVYRL…LKVPAILEAV (64 aa)) enclose the S4 RNA-binding domain.

Belongs to the universal ribosomal protein uS4 family. In terms of assembly, part of the 30S ribosomal subunit. Contacts protein S5. The interaction surface between S4 and S5 is involved in control of translational fidelity.

One of the primary rRNA binding proteins, it binds directly to 16S rRNA where it nucleates assembly of the body of the 30S subunit. Its function is as follows. With S5 and S12 plays an important role in translational accuracy. This Streptococcus gordonii (strain Challis / ATCC 35105 / BCRC 15272 / CH1 / DL1 / V288) protein is Small ribosomal subunit protein uS4.